Reading from the N-terminus, the 142-residue chain is Large ribosomal subunit protein uL11 (142 aa).

Belongs to the universal ribosomal protein uL11 family. In terms of assembly, part of the ribosomal stalk of the 50S ribosomal subunit. Interacts with L10 and the large rRNA to form the base of the stalk. L10 forms an elongated spine to which L12 dimers bind in a sequential fashion forming a multimeric L10(L12)X complex. Post-translationally, one or more lysine residues are methylated.

In terms of biological role, forms part of the ribosomal stalk which helps the ribosome interact with GTP-bound translation factors. In Afipia carboxidovorans (strain ATCC 49405 / DSM 1227 / KCTC 32145 / OM5) (Oligotropha carboxidovorans), this protein is Large ribosomal subunit protein uL11.